The primary structure comprises 1718 residues: PR domain zinc finger protein 2 (1718 aa).

Positions E28–N141 constitute an SET domain. Residues E155–S335 are disordered. The segment covering A159–K173 has biased composition (basic residues). A compositionally biased stretch (polar residues) spans Q189 to M202. The segment covering D204–P216 has biased composition (basic and acidic residues). Over residues D265 to A297 the composition is skewed to acidic residues. Positions E294–P316 are retinoblastoma protein binding. Over residues S304–S327 the composition is skewed to basic and acidic residues. A Glycyl lysine isopeptide (Lys-Gly) (interchain with G-Cter in SUMO2) cross-link involves residue K347. 2 C2H2-type zinc fingers span residues F360–H382 and F390–H412. The segment at R405–I457 is disordered. S421 carries the post-translational modification Phosphoserine. The C2H2-type 3 zinc finger occupies H483–H506. Disordered regions lie at residues K513–A550 and E622–V660. S643 is subject to Phosphoserine. Glycyl lysine isopeptide (Lys-Gly) (interchain with G-Cter in SUMO2) cross-links involve residues K651, K690, and K692. A disordered region spans residues T729 to P797. The span at S738–P748 shows a compositional bias: low complexity. S743 carries the post-translational modification Phosphoserine. A Glycyl lysine isopeptide (Lys-Gly) (interchain with G-Cter in SUMO2) cross-link involves residue K774. Residues S781, S785, and S796 each carry the phosphoserine modification. Residues K866 and K879 each participate in a glycyl lysine isopeptide (Lys-Gly) (interchain with G-Cter in SUMO2) cross-link. The disordered stretch occupies residues V903–S1083. Low complexity predominate over residues L951–D969. 2 short sequence motifs (SH3-binding) span residues P970–V979 and P985–P998. Over residues P970–A997 the composition is skewed to pro residues. The span at S1018–V1027 shows a compositional bias: low complexity. The segment covering S1028–E1038 has biased composition (pro residues). The SH3-binding signature appears at S1028–S1052. Low complexity predominate over residues S1042–S1072. 3 consecutive C2H2-type zinc fingers follow at residues F1134 to H1156, F1162 to H1185, and F1191 to H1214. Residues K1147 and K1151 each participate in a glycyl lysine isopeptide (Lys-Gly) (interchain with G-Cter in SUMO2) cross-link. The interval H1244 to S1265 is disordered. Positions D1251–S1265 are enriched in acidic residues. Residues K1257 and K1281 each participate in a glycyl lysine isopeptide (Lys-Gly) (interchain with G-Cter in SUMO2) cross-link. A C2H2-type 7; atypical zinc finger spans residues I1333–C1355. A C2H2-type 8; atypical zinc finger spans residues H1455 to C1478. Disordered regions lie at residues C1478–S1576, G1589–H1612, and K1625–S1652. Basic residues predominate over residues P1486–G1498. Residues H1499–S1511 are compositionally biased toward low complexity. 2 stretches are compositionally biased toward polar residues: residues Q1525–N1556 and H1599–S1608. Residues D1635–S1645 show a composition bias toward basic and acidic residues.

It belongs to the class V-like SAM-binding methyltransferase superfamily. Binds to the retinoblastoma protein (RB). Interacts with GATA3. As to expression, highly expressed in retinoblastoma cell lines and in brain tumors. Also expressed in a number of other cell lines and in brain, heart, skeletal muscle, liver and spleen. Isoform 1 is expressed in testis at much higher level than isoform 3.

It localises to the nucleus. It carries out the reaction L-lysyl(9)-[histone H3] + 3 S-adenosyl-L-methionine = N(6),N(6),N(6)-trimethyl-L-lysyl(9)-[histone H3] + 3 S-adenosyl-L-homocysteine + 3 H(+). S-adenosyl-L-methionine-dependent histone methyltransferase that specifically methylates 'Lys-9' of histone H3. May function as a DNA-binding transcription factor. Binds to the macrophage-specific TPA-responsive element (MTE) of the HMOX1 (heme oxygenase 1) gene and may act as a transcriptional activator of this gene. The sequence is that of PR domain zinc finger protein 2 (PRDM2) from Homo sapiens (Human).